The sequence spans 166 residues: MEFAFYFAAGVAVLATLRVITNSNPVHALLYLIISLLAISMTFFSLGAPFAGALEIIVYAGAIMVLFVFVVMMLNLGPAVVEQERKWLTPGIWVGPSALALVLLVELLVVLARTPSGAGIGHTTVDAKAVGISLYGPYLLVVELASMLLLAALVAAYHLGRQDAKQ.

5 helical membrane passes run 1–21, 28–48, 54–74, 92–112, and 134–154; these read MEFA…RVIT, ALLY…SLGA, LEII…VMML, IWVG…VVLA, and LYGP…AALV.

The protein belongs to the complex I subunit 6 family. Composed of 13 different subunits. Subunits NuoA, H, J, K, L, M, N constitute the membrane sector of the complex.

It is found in the cell inner membrane. It catalyses the reaction a quinone + NADH + 5 H(+)(in) = a quinol + NAD(+) + 4 H(+)(out). In terms of biological role, NDH-1 shuttles electrons from NADH, via FMN and iron-sulfur (Fe-S) centers, to quinones in the respiratory chain. The immediate electron acceptor for the enzyme in this species is believed to be ubiquinone. Couples the redox reaction to proton translocation (for every two electrons transferred, four hydrogen ions are translocated across the cytoplasmic membrane), and thus conserves the redox energy in a proton gradient. The sequence is that of NADH-quinone oxidoreductase subunit J (nuoJ) from Pseudomonas aeruginosa (strain ATCC 15692 / DSM 22644 / CIP 104116 / JCM 14847 / LMG 12228 / 1C / PRS 101 / PAO1).